Reading from the N-terminus, the 81-residue chain is Photosystem I iron-sulfur center (81 aa).

4Fe-4S ferredoxin-type domains follow at residues 2 to 31 and 39 to 68; these read SHSV…MIPW and IASA…VRVY. Residues Cys-11, Cys-14, Cys-17, Cys-21, Cys-48, Cys-51, Cys-54, and Cys-58 each contribute to the [4Fe-4S] cluster site.

As to quaternary structure, the eukaryotic PSI reaction center is composed of at least 11 subunits. It depends on [4Fe-4S] cluster as a cofactor.

The protein resides in the plastid. Its subcellular location is the chloroplast thylakoid membrane. It catalyses the reaction reduced [plastocyanin] + hnu + oxidized [2Fe-2S]-[ferredoxin] = oxidized [plastocyanin] + reduced [2Fe-2S]-[ferredoxin]. Apoprotein for the two 4Fe-4S centers FA and FB of photosystem I (PSI); essential for photochemical activity. FB is the terminal electron acceptor of PSI, donating electrons to ferredoxin. The C-terminus interacts with PsaA/B/D and helps assemble the protein into the PSI complex. Required for binding of PsaD and PsaE to PSI. PSI is a plastocyanin-ferredoxin oxidoreductase, converting photonic excitation into a charge separation, which transfers an electron from the donor P700 chlorophyll pair to the spectroscopically characterized acceptors A0, A1, FX, FA and FB in turn. This is Photosystem I iron-sulfur center from Zea mays (Maize).